A 214-amino-acid polypeptide reads, in one-letter code: Ras-like protein rasZ (214 aa).

16–23 is a binding site for GTP; sequence GDGGVGKT. The Effector region signature appears at 38–46; it reads YDPTIEDSY. Residues 63–67 and 122–125 each bind GTP; these read DTAGQ and NKSD. Position 211 is a cysteine methyl ester (Cys-211). Cys-211 carries the S-geranylgeranyl cysteine lipid modification. Residues 212-214 constitute a propeptide, removed in mature form; sequence KMM.

The protein belongs to the small GTPase superfamily. Ras family.

The protein resides in the cell membrane. It carries out the reaction GTP + H2O = GDP + phosphate + H(+). Functionally, ras proteins bind GDP/GTP and possess intrinsic GTPase activity. This chain is Ras-like protein rasZ (rasZ), found in Dictyostelium discoideum (Social amoeba).